The sequence spans 46 residues: MESSSPALSVAIAVLAALLGLTGFGVYTAFGPPSKRLDDPFDDHED.

Residues 10–30 traverse the membrane as a helical segment; it reads VAIAVLAALLGLTGFGVYTAF.

It belongs to the PsbN family.

The protein resides in the cellular thylakoid membrane. Functionally, may play a role in photosystem I and II biogenesis. This is Protein PsbN from Synechococcus sp. (strain WH7803).